Reading from the N-terminus, the 274-residue chain is Oxidized low-density lipoprotein receptor 1 (274 aa).

Residues 1 to 16 show a composition bias toward basic and acidic residues; sequence MAVDDLKVKPMKDQPD. Positions 1–25 are disordered; that stretch reads MAVDDLKVKPMKDQPDQKSNGKKPK. The Cytoplasmic portion of the chain corresponds to 1–31; sequence MAVDDLKVKPMKDQPDQKSNGKKPKGLRFLS. The chain crosses the membrane as a helical; Signal-anchor for type II membrane protein span at residues 32–54; that stretch reads SPWWCPAAVALGVLCLGSLMTII. 2 S-palmitoyl cysteine lipidation sites follow: Cys-36 and Cys-46. Positions 55–150 are neck; sequence MLGMQLLQVS…SGPCPEDWLW (96 aa). Residues 55-274 lie on the Extracellular side of the membrane; that stretch reads MLGMQLLQVS…QKKANLLRSE (220 aa). Residues Asn-73 and Asn-139 are each glycosylated (N-linked (GlcNAc...) asparagine). A coiled-coil region spans residues 84–139; the sequence is QVLAQQQAEAASQESQRELKEMIETLAKRLDEKSKKQMELNHQYLNLQEALKRMDN. 3 disulfides stabilise this stretch: Cys-144-Cys-155, Cys-172-Cys-264, and Cys-243-Cys-256. Residues 151-265 enclose the C-type lectin domain; sequence HGKNCYLFSS…CILVAYSICQ (115 aa).

Homodimer; disulfide-linked. May form a hexamer composed of 3 homodimers. Interacts with HSP70. Post-translationally, N-glycosylated.

It localises to the cell membrane. The protein localises to the membrane raft. The protein resides in the secreted. Receptor that mediates the recognition, internalization and degradation of oxidatively modified low density lipoprotein (oxLDL) by vascular endothelial cells. OxLDL is a marker of atherosclerosis that induces vascular endothelial cell activation and dysfunction, resulting in pro-inflammatory responses, pro-oxidative conditions and apoptosis. Its association with oxLDL induces the activation of NF-kappa-B through an increased production of intracellular reactive oxygen and a variety of pro-atherogenic cellular responses including a reduction of nitric oxide (NO) release, monocyte adhesion and apoptosis. In addition to binding oxLDL, it acts as a receptor for the HSP70 protein involved in antigen cross-presentation to naive T-cells in dendritic cells, thereby participating in cell-mediated antigen cross-presentation. Also involved in inflammatory process, by acting as a leukocyte-adhesion molecule at the vascular interface in endotoxin-induced inflammation. Also acts as a receptor for advanced glycation end (AGE) products, activated platelets, monocytes, apoptotic cells and both Gram-negative and Gram-positive bacteria. This chain is Oxidized low-density lipoprotein receptor 1 (OLR1), found in Oryctolagus cuniculus (Rabbit).